Reading from the N-terminus, the 178-residue chain is Large ribosomal subunit protein uL6 (178 aa).

The protein belongs to the universal ribosomal protein uL6 family. As to quaternary structure, part of the 50S ribosomal subunit.

In terms of biological role, this protein binds to the 23S rRNA, and is important in its secondary structure. It is located near the subunit interface in the base of the L7/L12 stalk, and near the tRNA binding site of the peptidyltransferase center. The chain is Large ribosomal subunit protein uL6 from Arthrobacter sp. (strain FB24).